The primary structure comprises 715 residues: Harpin secretion protein HrpI (715 aa).

The next 7 membrane-spanning stretches (helical) occupy residues 23-43 (GAAIVMSIVFMMIIPLPTGLI), 45-65 (VLIALNICISSLLIVLAMYLP), 69-89 (AFSTFPSVLLLTTMFRLALSI), 115-135 (GNLAVGLVIFLILTVVNFLVI), 203-223 (AIAGLVIVFINMIGGFAIGVL), 241-261 (IGDGLIAQIPALLISLTAGMI), and 298-318 (MLGFALLPGMPTAVFVIISAI).

This sequence belongs to the FHIPEP (flagella/HR/invasion proteins export pore) family.

It localises to the cell inner membrane. In terms of biological role, involved in the secretion of harpin; a proteinaceous elicitor of the hypersensitivity response in plants. The polypeptide is Harpin secretion protein HrpI (hrpI) (Erwinia amylovora (Fire blight bacteria)).